The sequence spans 34 residues: Photosystem II reaction center protein Psb30 (34 aa).

The chain crosses the membrane as a helical span at residues 6–26 (IVAQLLSLALVTLSGPAVIFL).

This sequence belongs to the Psb30/Ycf12 family. PSII is composed of 1 copy each of membrane proteins PsbA, PsbB, PsbC, PsbD, PsbE, PsbF, PsbH, PsbI, PsbJ, PsbK, PsbL, PsbM, PsbT, PsbX, PsbY, PsbZ, Psb30/Ycf12, peripheral proteins of the oxygen-evolving complex and a large number of cofactors. It forms dimeric complexes.

Its subcellular location is the plastid. The protein localises to the chloroplast thylakoid membrane. A core subunit of photosystem II (PSII), probably helps stabilize the reaction center. This Emiliania huxleyi (Coccolithophore) protein is Photosystem II reaction center protein Psb30.